The sequence spans 310 residues: Protein RL1 (310 aa).

Polar residues predominate over residues 1–12 (MPATDTNSTHTT). The tract at residues 1-44 (MPATDTNSTHTTPLHPEDQHTLPLHHSTTQPHVQTSDKHADKQH) is disordered. Positions 35–44 (TSDKHADKQH) are enriched in basic and acidic residues. Residues 153–159 (LLLARQR) are involved in the interaction with host DDB1. The segment at 205–252 (ERPSAGEAQARGLLPRIRITPISTSPRPKPPQPTTSTASHPHATARPD) is disordered. Positions 238 to 248 (TTSTASHPHAT) are enriched in low complexity.

The protein belongs to the HHV-5 HKLF1 family. As to quaternary structure, interacts with host adaptor protein DDB1; this interaction allows RL1 to recruit the cullin4-RING E3 ubiquitin ligase (CRL4) complex and promote SLN11 degradation.

Functionally, degrades the host antiviral factor SLFN11 via the cullin4-RING E3 ubiquitin ligase (CRL4) complex. In Human cytomegalovirus (strain Merlin) (HHV-5), this protein is Protein RL1 (RL1).